We begin with the raw amino-acid sequence, 246 residues long: Small ribosomal subunit protein uS2 (246 aa).

The disordered stretch occupies residues 226-246; the sequence is QGEEEAEVAEETAPETETTTA. Residues 229–239 are compositionally biased toward acidic residues; the sequence is EEAEVAEETAP.

The protein belongs to the universal ribosomal protein uS2 family. In terms of assembly, part of the 30S ribosomal subunit. Interacts with BrxC.

The protein is Small ribosomal subunit protein uS2 (rpsB) of Bacillus subtilis (strain 168).